The sequence spans 170 residues: Large ribosomal subunit protein uL11 (170 aa).

It belongs to the universal ribosomal protein uL11 family. Part of the ribosomal stalk of the 50S ribosomal subunit. Interacts with L10 and the large rRNA to form the base of the stalk. L10 forms an elongated spine to which L12 dimers bind in a sequential fashion forming a multimeric L10(L12)X complex.

Forms part of the ribosomal stalk which helps the ribosome interact with GTP-bound translation factors. This chain is Large ribosomal subunit protein uL11, found in Saccharolobus islandicus (strain M.14.25 / Kamchatka #1) (Sulfolobus islandicus).